Here is a 1038-residue protein sequence, read N- to C-terminus: Elongation factor 3 (1038 aa).

HEAT repeat units lie at residues 93–131 (EAYL…SANK), 133–170 (STIR…VAPY), 174–211 (RCLP…VVGN), 213–249 (DIEP…TVEA), 255–287 (MEPL…LMDD), and 292–331 (QLFI…AGGS). An ADP-binding site is contributed by Glu-406. 2 ABC transporter domains span residues 426–654 (IFIE…YYEL) and 680–995 (IRLT…EEVT). ADP-binding residues include Asn-716, Glu-924, Asn-927, and His-953. The interval 1012–1038 (RKEKKAKDKARKEAEARGEYYSDSDEE) is disordered. Over residues 1021 to 1031 (ARKEAEARGEY) the composition is skewed to basic and acidic residues.

It belongs to the ABC transporter superfamily. ABCF family. EF3 subfamily. In terms of assembly, monomer.

It is found in the cytoplasm. The enzyme catalyses ATP + H2O = ADP + phosphate + H(+). It functions in the pathway protein biosynthesis; polypeptide chain elongation. In terms of biological role, ribosome-dependent ATPase that functions in cytoplasmic translation elongation. Required for the ATP-dependent release of deacylated tRNA from the ribosomal E-site during protein biosynthesis. Stimulates the eEF1A-dependent binding of aminoacyl-tRNA to the ribosomal A-site, which has reduced affinity for tRNA as long as the E-site is occupied. Assists translation termination by stimulating the release of nascent protein from the ribosome by release factors. This chain is Elongation factor 3, found in Phytophthora infestans (strain T30-4) (Potato late blight agent).